Consider the following 303-residue polypeptide: Protoheme IX farnesyltransferase (303 aa).

Transmembrane regions (helical) follow at residues 25–45, 54–74, 118–138, 166–186, 230–250, and 280–300; these read MGLV…AIVM, IPQI…ACAL, CLFL…VGYV, IGWV…FLVV, LVLL…FVVI, and FVYS…VSLI.

The protein belongs to the UbiA prenyltransferase family. Protoheme IX farnesyltransferase subfamily. As to quaternary structure, interacts with CtaA.

The protein resides in the cell membrane. The enzyme catalyses heme b + (2E,6E)-farnesyl diphosphate + H2O = Fe(II)-heme o + diphosphate. It participates in porphyrin-containing compound metabolism; heme O biosynthesis; heme O from protoheme: step 1/1. In terms of biological role, converts heme B (protoheme IX) to heme O by substitution of the vinyl group on carbon 2 of heme B porphyrin ring with a hydroxyethyl farnesyl side group. This is Protoheme IX farnesyltransferase from Staphylococcus epidermidis (strain ATCC 12228 / FDA PCI 1200).